Reading from the N-terminus, the 189-residue chain is uncharacterized protein (189 aa).

The segment covering 1-15 (MDKHGVKTPLWRKEV) has biased composition (basic and acidic residues). The tract at residues 1–77 (MDKHGVKTPL…SPLRQESSSQ (77 aa)) is disordered. Acidic residues-rich tracts occupy residues 16–29 (EDPE…EDDS) and 46–56 (SATETEEDSRD). Residues 65–77 (VSYSPLRQESSSQ) show a composition bias toward polar residues.

This is an uncharacterized protein from Mus musculus (Mouse).